A 354-amino-acid chain; its full sequence is S-adenosylmethionine:tRNA ribosyltransferase-isomerase (354 aa).

This sequence belongs to the QueA family. Monomer.

It localises to the cytoplasm. The enzyme catalyses 7-aminomethyl-7-carbaguanosine(34) in tRNA + S-adenosyl-L-methionine = epoxyqueuosine(34) in tRNA + adenine + L-methionine + 2 H(+). It participates in tRNA modification; tRNA-queuosine biosynthesis. Functionally, transfers and isomerizes the ribose moiety from AdoMet to the 7-aminomethyl group of 7-deazaguanine (preQ1-tRNA) to give epoxyqueuosine (oQ-tRNA). The sequence is that of S-adenosylmethionine:tRNA ribosyltransferase-isomerase from Salmonella typhi.